A 410-amino-acid polypeptide reads, in one-letter code: Argininosuccinate synthase (410 aa).

9-17 serves as a coordination point for ATP; that stretch reads AYSGGLDTS. L-citrulline is bound at residue Tyr-86. Gly-116 is an ATP binding site. The L-aspartate site is built by Thr-118, Asn-122, and Asp-123. Position 122 (Asn-122) interacts with L-citrulline. Positions 126, 174, 259, and 271 each coordinate L-citrulline.

It belongs to the argininosuccinate synthase family. Type 1 subfamily. As to quaternary structure, homotetramer.

It is found in the cytoplasm. The enzyme catalyses L-citrulline + L-aspartate + ATP = 2-(N(omega)-L-arginino)succinate + AMP + diphosphate + H(+). Its pathway is amino-acid biosynthesis; L-arginine biosynthesis; L-arginine from L-ornithine and carbamoyl phosphate: step 2/3. This is Argininosuccinate synthase from Limosilactobacillus reuteri (strain DSM 20016) (Lactobacillus reuteri).